The following is a 390-amino-acid chain: MNLHEYQSKHLLKKYNIPVPASEVVFNPDAAVDAAAKIGGDRWVVKAQVHAGGRGKAGGVRLVKNKEELKSAVKALLGTRLVTYQTDERGQPVNQILVEQTSDIARELYLGAVIDRASQRIVFMASTEGGVEIEKVAEKSPEKILKVTIDPAIGLQPFQCRQLFFGLGLQDLKQMRSFTDIVMGLYRLFTERDLSLLEINPLVITGSGELICLDAKINIDDSALYRQSELREMRDTTQEDEHETMAQQWELNYIKLDGNIGCMVNGAGLAMATMDLIKLSGGDPANFLDVGGSATKERVTEAFKIIVSDKNVKGILVNIFGGIVRCDLIADGIISAVKEVGIDVPVVVRLEGNNAQLGAKKLADSDMNIIAAKGFADAAEQIVKQVGVIA.

Residues 9–245 enclose the ATP-grasp domain; it reads KHLLKKYNIP…TTQEDEHETM (237 aa). ATP contacts are provided by residues lysine 46, 53-55, glutamate 99, serine 102, and glutamate 107; that span reads GRG. Positions 200 and 214 each coordinate Mg(2+). Substrate contacts are provided by residues asparagine 265 and 322-324; that span reads GIV.

It belongs to the succinate/malate CoA ligase beta subunit family. As to quaternary structure, heterotetramer of two alpha and two beta subunits. The cofactor is Mg(2+).

It catalyses the reaction succinate + ATP + CoA = succinyl-CoA + ADP + phosphate. The enzyme catalyses GTP + succinate + CoA = succinyl-CoA + GDP + phosphate. It participates in carbohydrate metabolism; tricarboxylic acid cycle; succinate from succinyl-CoA (ligase route): step 1/1. Its function is as follows. Succinyl-CoA synthetase functions in the citric acid cycle (TCA), coupling the hydrolysis of succinyl-CoA to the synthesis of either ATP or GTP and thus represents the only step of substrate-level phosphorylation in the TCA. The beta subunit provides nucleotide specificity of the enzyme and binds the substrate succinate, while the binding sites for coenzyme A and phosphate are found in the alpha subunit. The sequence is that of Succinate--CoA ligase [ADP-forming] subunit beta from Coxiella burnetii (strain RSA 331 / Henzerling II).